Reading from the N-terminus, the 431-residue chain is Phosphoribosylamine--glycine ligase (431 aa).

The region spanning 109–316 (KDFLARHGIP…LVDLVEAAID (208 aa)) is the ATP-grasp domain. 135–196 (VREKGAPIVV…EEFLDGEEAS (62 aa)) is a binding site for ATP. Mg(2+)-binding residues include Glu-286 and Asn-288.

This sequence belongs to the GARS family. Requires Mg(2+) as cofactor. Mn(2+) serves as cofactor.

The enzyme catalyses 5-phospho-beta-D-ribosylamine + glycine + ATP = N(1)-(5-phospho-beta-D-ribosyl)glycinamide + ADP + phosphate + H(+). It functions in the pathway purine metabolism; IMP biosynthesis via de novo pathway; N(1)-(5-phospho-D-ribosyl)glycinamide from 5-phospho-alpha-D-ribose 1-diphosphate: step 2/2. This Xanthomonas campestris pv. campestris (strain ATCC 33913 / DSM 3586 / NCPPB 528 / LMG 568 / P 25) protein is Phosphoribosylamine--glycine ligase.